A 435-amino-acid polypeptide reads, in one-letter code: Bifunctional protein GlmU (435 aa).

Residues 1-224 are pyrophosphorylase; that stretch reads MNDTSIIILA…EQNFMGINDK (224 aa). UDP-N-acetyl-alpha-D-glucosamine-binding positions include 9–12, Lys23, Gln75, and 82–83; these read LAAG and GT. Asp103 contributes to the Mg(2+) binding site. UDP-N-acetyl-alpha-D-glucosamine is bound by residues Gly136, Glu150, Asn165, and Asn222. Asn222 contributes to the Mg(2+) binding site. The segment at 225-245 is linker; it reads FQLSVAEKIMQDEIKQDLMKA. The N-acetyltransferase stretch occupies residues 246-435; sequence GVLMRLPESI…KFFGKNNAEK (190 aa). Residues Arg309 and Lys326 each contribute to the UDP-N-acetyl-alpha-D-glucosamine site. His337 functions as the Proton acceptor in the catalytic mechanism. UDP-N-acetyl-alpha-D-glucosamine is bound by residues Tyr340 and Asn351. Acetyl-CoA is bound by residues 360 to 361, Ser379, Ala397, and Arg414; that span reads NY.

This sequence in the N-terminal section; belongs to the N-acetylglucosamine-1-phosphate uridyltransferase family. In the C-terminal section; belongs to the transferase hexapeptide repeat family. Homotrimer. The cofactor is Mg(2+).

It is found in the cytoplasm. The enzyme catalyses alpha-D-glucosamine 1-phosphate + acetyl-CoA = N-acetyl-alpha-D-glucosamine 1-phosphate + CoA + H(+). It carries out the reaction N-acetyl-alpha-D-glucosamine 1-phosphate + UTP + H(+) = UDP-N-acetyl-alpha-D-glucosamine + diphosphate. The protein operates within nucleotide-sugar biosynthesis; UDP-N-acetyl-alpha-D-glucosamine biosynthesis; N-acetyl-alpha-D-glucosamine 1-phosphate from alpha-D-glucosamine 6-phosphate (route II): step 2/2. It participates in nucleotide-sugar biosynthesis; UDP-N-acetyl-alpha-D-glucosamine biosynthesis; UDP-N-acetyl-alpha-D-glucosamine from N-acetyl-alpha-D-glucosamine 1-phosphate: step 1/1. It functions in the pathway bacterial outer membrane biogenesis; LPS lipid A biosynthesis. In terms of biological role, catalyzes the last two sequential reactions in the de novo biosynthetic pathway for UDP-N-acetylglucosamine (UDP-GlcNAc). The C-terminal domain catalyzes the transfer of acetyl group from acetyl coenzyme A to glucosamine-1-phosphate (GlcN-1-P) to produce N-acetylglucosamine-1-phosphate (GlcNAc-1-P), which is converted into UDP-GlcNAc by the transfer of uridine 5-monophosphate (from uridine 5-triphosphate), a reaction catalyzed by the N-terminal domain. This is Bifunctional protein GlmU from Campylobacter curvus (strain 525.92).